The primary structure comprises 344 residues: DNA-directed RNA polymerase subunit alpha (344 aa).

Residues 1-238 are alpha N-terminal domain (alpha-NTD); sequence MKVIKTAPLI…KQLGVFGERP (238 aa). Residues 254 to 344 form an alpha C-terminal domain (alpha-CTD) region; that stretch reads AKDLSAKIES…EKLEDKGGND (91 aa).

It belongs to the RNA polymerase alpha chain family. In terms of assembly, homodimer. The RNAP catalytic core consists of 2 alpha, 1 beta, 1 beta' and 1 omega subunit. When a sigma factor is associated with the core the holoenzyme is formed, which can initiate transcription.

It carries out the reaction RNA(n) + a ribonucleoside 5'-triphosphate = RNA(n+1) + diphosphate. Functionally, DNA-dependent RNA polymerase catalyzes the transcription of DNA into RNA using the four ribonucleoside triphosphates as substrates. The sequence is that of DNA-directed RNA polymerase subunit alpha from Helicobacter pylori (strain J99 / ATCC 700824) (Campylobacter pylori J99).